Reading from the N-terminus, the 1411-residue chain is Early endosome antigen 1 (1411 aa).

Residues 1 to 27 (MLRRILQRTPGRVGSQGSDLDSSATPI) form a disordered region. Residues 15–27 (SQGSDLDSSATPI) are compositionally biased toward polar residues. Residues 41-64 (FICPQCMKSLGSADELFKHYEAVH) form a C2H2-type zinc finger. Phosphoserine occurs at positions 52 and 70. The stretch at 74 to 1348 (GESNLALKRD…IKHTQALNRK (1275 aa)) forms a coiled coil. A disordered region spans residues 473-501 (VTNSTELQHQLDKTKQQHQEQQALQQSTT). Over residues 481–490 (HQLDKTKQQH) the composition is skewed to basic and acidic residues. An FYVE-type zinc finger spans residues 1352–1410 (DNEVQNCMACGKGFSVTVRRHHCRQCGNIFCAECSAKNALTPSSKKPVRVCDACFNDLQ). Cys1358, Cys1361, Cys1374, Cys1377, Cys1382, Cys1385, Cys1402, and Cys1405 together coordinate Zn(2+).

As to quaternary structure, homodimer. Binds STX6. Binds RAB5A, RAB5B, RAB5C and RAB22A that have been activated by GTP-binding. Interacts with RAB31. Interacts with ERBB2. Interacts with SAMD9 and SAMD9L. May interact with PLEKHF2.

It is found in the cytoplasm. It localises to the early endosome membrane. Its function is as follows. Binds phospholipid vesicles containing phosphatidylinositol 3-phosphate and participates in endosomal trafficking. The sequence is that of Early endosome antigen 1 (EEA1) from Homo sapiens (Human).